The chain runs to 637 residues: Glutathione hydrolase 3 (637 aa).

The chain crosses the membrane as a helical span at residues 28–48; that stretch reads LKISLLLLLILLATSGYYSFS. Asparagine 50 is a glycosylation site (N-linked (GlcNAc...) asparagine). L-glutamate is bound at residue arginine 147. N-linked (GlcNAc...) asparagine glycosylation is found at asparagine 271, asparagine 374, and asparagine 398. Threonine 418 serves as the catalytic Nucleophile. Residues threonine 436, asparagine 438, glutamate 457, aspartate 460, 488–489, and 509–510 contribute to the L-glutamate site; these read SS and GG. Asparagine 553 is a glycosylation site (N-linked (GlcNAc...) asparagine).

Belongs to the gamma-glutamyltransferase family. In terms of tissue distribution, expressed in roots, cotyledons, leaves, flowers and siliques.

Its subcellular location is the vacuole membrane. The catalysed reaction is an N-terminal (5-L-glutamyl)-[peptide] + an alpha-amino acid = 5-L-glutamyl amino acid + an N-terminal L-alpha-aminoacyl-[peptide]. It catalyses the reaction glutathione + H2O = L-cysteinylglycine + L-glutamate. The enzyme catalyses an S-substituted glutathione + H2O = an S-substituted L-cysteinylglycine + L-glutamate. It functions in the pathway sulfur metabolism; glutathione metabolism. May play a role in protecting plants from some xenobiotic chemicals by degrading vacuolar glutathione conjugates into cysteine conjugates. The protein is Glutathione hydrolase 3 (GGT3) of Arabidopsis thaliana (Mouse-ear cress).